The following is a 351-amino-acid chain: MSHQSTINFIRFTFVILSLLAIYTILIPSIRKGFFQHITECEVTGKLSRSSGADARMIESFTGVPVLDIFVKALVTSFWPVINGENPALSLLGVPAVASMGVSYLLLLLEARRTRSLLSVTWRLAWVGLLQTNFSQAIILPIYCAIAFSSSKKTNGFRPIPHVTISLILCVYTGMALVALPSPAVIPDGLKQVVVAFMVPWALWVFVMVFMASYLFPIEVEKEKSRRTIYIFALVIAATTHLGALLASLLHADLGPADVFLPPLPWYVTRFPSLEEGMASFLQWDYLIASVTLFLWAVAVYLRDCDEHVDWQRFGLEVCAISVIISPAAMAVLLIWRLDEMLSRRGIAKED.

9 helical membrane passes run 7-27 (INFI…TILI), 62-82 (TGVP…WPVI), 89-109 (LSLL…LLLL), 126-146 (WVGL…YCAI), 160-180 (IPHV…LVAL), 193-213 (VVVA…FMAS), 229-249 (IYIF…LASL), 281-301 (FLQW…VAVY), and 316-336 (LEVC…LLIW).

The protein belongs to the membrane-bound ascI terpene cyclase family.

The protein resides in the membrane. It functions in the pathway secondary metabolite biosynthesis. In terms of biological role, epoxide hydrolase; part of the gene cluster that mediates the biosynthesis of the polyenes aspernidgulenes. The carbon backbone of aspernidgulenes is synthesized by the HR-PKS sdgA, which accepts acetyl-CoA as the starter unit and performs malonyl-CoA extensions as well as regioselective methylation and reduction. The resulting nonaketide offloads the HR-PKS by intramolecular lactonization to yield the 5,6-dihydro-alpha-pyrone-containing hexaenoic acids preaspernidgulene A1 and A2. The FAD-dependent monooxygenase sdgC then installs the first epoxide on the penultimate double bond. Subsequently, the FAD-dependent monooxygenase sdgF presumably generates a ketone intermediate through Meinwald rearrangement involving a hydride shift. Next, sdgC introduces another epoxide on the last olefin of the ketone intermediate after E/Z isomerization. The epoxide hydrolase sdgD then catalyzes stereospecific cyclization of the 5,6-dihydro-alpha-pyrone and opening of the epoxide ring to form an oxygenated trimethylcyclopentanone and an oxabicyclo[2.2.1]heptane unit. Finally, the bicyclic unit undergoes hydrolytic cleavage, either spontaneously or catalyzed by sdgD, to assemble the dimethyl-gamma-lactone moiety in aspernidgulene A1. This is Terpene cyclase sdgD from Emericella nidulans (strain FGSC A4 / ATCC 38163 / CBS 112.46 / NRRL 194 / M139) (Aspergillus nidulans).